Here is a 207-residue protein sequence, read N- to C-terminus: Large ribosomal subunit protein uL4 (207 aa).

The disordered stretch occupies residues 59–78 (GSGKKPFKQKGTGQARQGCK).

The protein belongs to the universal ribosomal protein uL4 family. As to quaternary structure, part of the 50S ribosomal subunit.

Its function is as follows. One of the primary rRNA binding proteins, this protein initially binds near the 5'-end of the 23S rRNA. It is important during the early stages of 50S assembly. It makes multiple contacts with different domains of the 23S rRNA in the assembled 50S subunit and ribosome. Forms part of the polypeptide exit tunnel. This is Large ribosomal subunit protein uL4 from Geotalea daltonii (strain DSM 22248 / JCM 15807 / FRC-32) (Geobacter daltonii).